Reading from the N-terminus, the 150-residue chain is Large ribosomal subunit protein uL11 (150 aa).

Belongs to the universal ribosomal protein uL11 family. In terms of assembly, part of the ribosomal stalk of the 50S ribosomal subunit. Interacts with L10 and the large rRNA to form the base of the stalk. L10 forms an elongated spine to which L12 dimers bind in a sequential fashion forming a multimeric L10(L12)X complex. One or more lysine residues are methylated.

Functionally, forms part of the ribosomal stalk which helps the ribosome interact with GTP-bound translation factors. The polypeptide is Large ribosomal subunit protein uL11 (Azobacteroides pseudotrichonymphae genomovar. CFP2).